The sequence spans 287 residues: MSPSLVSDTQKHERGSHGVKIKHFSPYIAVCVTTFSLAFCCFMVHGAITRQPTHLLPFFFIQVFDLIICLIHILGFMSSTSDIRLVIHTKTGPIYIKSTGLTFIILSISRMMLAFKAYCLGMVWDCYKYLMLNRRGNLLDDWYSDQWGHLSTFWSLLRTGRNRGNNSIGNSGSPNEPNTRPRPDTITYDPANDLPKYEDILKIPANAYTPPPYYCSNTNGNVNTTTTDAVTTNTTITSATTVNATTTITTNANTNTSTTTSVISPLTTTNKDDTQINNASSNAHSSC.

Over 1 to 27 (MSPSLVSDTQKHERGSHGVKIKHFSPY) the chain is Extracellular. The helical transmembrane segment at 28 to 48 (IAVCVTTFSLAFCCFMVHGAI) threads the bilayer. Residues 49-55 (TRQPTHL) are Cytoplasmic-facing. A helical transmembrane segment spans residues 56 to 76 (LPFFFIQVFDLIICLIHILGF). Residues 77-91 (MSSTSDIRLVIHTKT) are Extracellular-facing. Residues 92–114 (GPIYIKSTGLTFIILSISRMMLA) form a helical membrane-spanning segment. At 115–287 (FKAYCLGMVW…NASSNAHSSC (173 aa)) the chain is on the cytoplasmic side. The tract at residues 165 to 190 (NNSIGNSGSPNEPNTRPRPDTITYDP) is disordered.

As to quaternary structure, interacts (via N-terminal extracellular domain) with human C2a.

The protein localises to the cell membrane. Functionally, cell surface receptor that binds to human complement C2a protein. This results in inhibition of the classical and lectin pathways of complement activation, probably due to interference with binding of C2a to C4b and interference with cleavage by C1 or MASP2 such that C3 convertase cannot be formed. This infers resistance to complement-mediated cell lysis, allowing parasite survival and infection. The chain is Tetraspanning orphan receptor from Trypanosoma cruzi.